Consider the following 193-residue polypeptide: Chaperone protein TorD (193 aa).

This sequence belongs to the TorD/DmsD family. TorD subfamily.

It is found in the cytoplasm. Involved in the biogenesis of TorA. Acts on TorA before the insertion of the molybdenum cofactor and, as a result, probably favors a conformation of the apoenzyme that is competent for acquiring the cofactor. The sequence is that of Chaperone protein TorD from Actinobacillus succinogenes (strain ATCC 55618 / DSM 22257 / CCUG 43843 / 130Z).